The primary structure comprises 458 residues: D-inositol 3-phosphate glycosyltransferase (458 aa).

Residues 1–29 form a disordered region; it reads MRADRPGHRSRGINPGPGMFTLVGPDERD. Histidine 47 contributes to the 1D-myo-inositol 3-phosphate binding site. Residues 53 to 54 and glycine 61 contribute to the UDP-N-acetyl-alpha-D-glucosamine site; that span reads QP. 1D-myo-inositol 3-phosphate contacts are provided by residues 58–63, lysine 116, tyrosine 149, threonine 173, and arginine 193; that span reads DAGGMN. Residues arginine 267, lysine 272, and valine 339 each contribute to the UDP-N-acetyl-alpha-D-glucosamine site. Alanine 351 is a binding site for Mg(2+). Residues glutamate 361 and glutamate 369 each contribute to the UDP-N-acetyl-alpha-D-glucosamine site. A Mg(2+)-binding site is contributed by threonine 375.

The protein belongs to the glycosyltransferase group 1 family. MshA subfamily. In terms of assembly, homodimer.

It catalyses the reaction 1D-myo-inositol 3-phosphate + UDP-N-acetyl-alpha-D-glucosamine = 1D-myo-inositol 2-acetamido-2-deoxy-alpha-D-glucopyranoside 3-phosphate + UDP + H(+). Catalyzes the transfer of a N-acetyl-glucosamine moiety to 1D-myo-inositol 3-phosphate to produce 1D-myo-inositol 2-acetamido-2-deoxy-glucopyranoside 3-phosphate in the mycothiol biosynthesis pathway. This is D-inositol 3-phosphate glycosyltransferase from Nocardioides sp. (strain ATCC BAA-499 / JS614).